A 103-amino-acid polypeptide reads, in one-letter code: Small ribosomal subunit protein uS10 (103 aa).

Belongs to the universal ribosomal protein uS10 family. As to quaternary structure, part of the 30S ribosomal subunit.

Functionally, involved in the binding of tRNA to the ribosomes. This is Small ribosomal subunit protein uS10 from Ruminiclostridium cellulolyticum (strain ATCC 35319 / DSM 5812 / JCM 6584 / H10) (Clostridium cellulolyticum).